The sequence spans 563 residues: MDYKNKIAQLIKQHVDLDIDAIEKLIEIPPKSEMGDYAFPCFQLSKVMRKAPNMIAETLKDAINKDGFERIENLGPYLNFFVDKGVFAENTINKILKDGDSYGESNIGEGKTVCVEYSSPNIAKPFHVGHLFTTAIGNSLYKMFKKEGYDVVGLNHLGDWGTQFGKLISAYNRWVDEEALEKAPIDELLRIYVKFHDEAEKDPSLEDEGRMYFKKLETGDAEAQALWKRFRDLSLKEFERVYDILGVKFDSLAGEAFYNDKMDVVVNELKDKGLLVESNGAQVVMLDDYNMPPCIVLKGDGASIYATRDLAAAMYRKKTYDFYKSIYVVGSPQALHFKQVFKVLELAGHEWANDCVHVGFGLVKFADRKLSTRKGEVVLLDDLIRESVEKTLEVINEKNPELENKEEVAKKIGVGAIIFTYLKNSREKDIVFDWKEILSFEGETGPYVQYSYARANSIISRAENISSEVDYSKLSSKEEFELVKVLANFNNQIKLATDKLEPSILTRYVIDVAKSFNKFYNAHSVLNLDDEVLKATRLSLVKSSLQVIKNGLELLGIDVVEKM.

The 'HIGH' region motif lies at 120 to 130 (PNIAKPFHVGH).

Belongs to the class-I aminoacyl-tRNA synthetase family. As to quaternary structure, monomer.

The protein resides in the cytoplasm. The catalysed reaction is tRNA(Arg) + L-arginine + ATP = L-arginyl-tRNA(Arg) + AMP + diphosphate. This is Arginine--tRNA ligase from Clostridium botulinum (strain Alaska E43 / Type E3).